We begin with the raw amino-acid sequence, 346 residues long: tRNA-specific 2-thiouridylase MnmA (346 aa).

6–13 (AMSGGTDS) contributes to the ATP binding site. The active-site Nucleophile is the cysteine 90. Cysteine 90 and cysteine 187 are oxidised to a cystine. Residue glycine 114 coordinates ATP. Positions 137–139 (KDQ) are interaction with tRNA. Cysteine 187 (cysteine persulfide intermediate) is an active-site residue. An interaction with tRNA region spans residues 292-293 (RY).

Belongs to the MnmA/TRMU family.

The protein resides in the cytoplasm. The enzyme catalyses S-sulfanyl-L-cysteinyl-[protein] + uridine(34) in tRNA + AH2 + ATP = 2-thiouridine(34) in tRNA + L-cysteinyl-[protein] + A + AMP + diphosphate + H(+). Functionally, catalyzes the 2-thiolation of uridine at the wobble position (U34) of tRNA, leading to the formation of s(2)U34. In Nitratidesulfovibrio vulgaris (strain DP4) (Desulfovibrio vulgaris), this protein is tRNA-specific 2-thiouridylase MnmA.